The following is a 2435-amino-acid chain: ATP-binding cassette sub-family A member 2 (2435 aa).

A glycan (N-linked (GlcNAc...) asparagine) is linked at N14. The next 2 helical transmembrane spans lie at 22-42 and 54-74; these read PWVLAFEIFIPLVLFFILLGL and AFYTAAPLTSAGILPVMQSLC. Residues N89, N168, and N173 are each glycosylated (N-linked (GlcNAc...) asparagine). Q271 is modified (N5-methylglutamine). Residues N305, N368, N379, N420, N432, N476, N484, N494, N530, N544, N590, N600, and N628 are each glycosylated (N-linked (GlcNAc...) asparagine). The next 6 membrane-spanning stretches (helical) occupy residues 699-719, 750-770, 782-802, 813-833, 857-877, and 893-913; these read FLFVIEHMMPLCMVISWVYSV, VAWFITGFVQLSISVTALTAI, VVIIWLFLAVYAVATIMFCFL, ASACGGIIYFLSYVPYMYVAI, AFGLGSKYFALYEVAGVGIQW, and LLAVTMLMVDAVVYGILTWYI. The ABC transporter 1 domain occupies 990–1221; that stretch reads VCVDKLTKVY…YGDGYRLTLV (232 aa). ATP is bound at residue 1024 to 1031; the sequence is GHNGAGKT. Disordered regions lie at residues 1223-1243 and 1325-1357; these read RPAEPGGPQEPGLASSPPGRA and DQSLENSEADVKESRKDVLPGAEGPASGEGHAG. Phosphoserine occurs at positions 1238, 1327, and 1331. The segment covering 1333–1342 has biased composition (basic and acidic residues); sequence ADVKESRKDV. N1408 is a glycosylation site (N-linked (GlcNAc...) asparagine). A helical membrane pass occupies residues 1456–1476; that stretch reads ALFSQILLPAFFVCVAMTVAL. Residues N1496, N1549, and N1557 are each glycosylated (N-linked (GlcNAc...) asparagine). The interval 1586–1610 is disordered; it reads SNFVPPPPSPAPSDSPASPDEDLQA. Over residues 1589 to 1598 the composition is skewed to pro residues; that stretch reads VPPPPSPAPS. N-linked (GlcNAc...) asparagine glycosylation is found at N1612, N1677, and N1775. 5 helical membrane passes run 1792–1812, 1841–1861, 1872–1892, 1905–1925, and 1991–2011; these read VVIAIFIIVAMSFVPASFVVF, VWDMLNYLVPATCCVIILFVF, FPAVLSLFLLYGWSITPIMYP, VFLIVINLFIGITATVATFLL, and GLVAMAVEGVVGFLLTIMCQY. The region spanning 2050 to 2285 is the ABC transporter 2 domain; that stretch reads VKIENLTKVY…FGDGYMITVR (236 aa). N2054 carries N-linked (GlcNAc...) asparagine glycosylation. Residue 2087–2094 participates in ATP binding; it reads GVNGAGKT. At T2412 the chain carries Phosphothreonine.

This sequence belongs to the ABC transporter superfamily. ABCA family. In terms of processing, methylated at Gln-271 by N6AMT1. In terms of tissue distribution, highly expressed in the brain,peripheral blood leukocytes and ovary, whereas lower levels of expression is observed in kidney and liver. As to expression, weakly expressed in brain and highly in peripheral blood leukocytes.

The protein resides in the endosome membrane. It is found in the lysosome membrane. Its function is as follows. Probable lipid transporter that modulates cholesterol sequestration in the late endosome/lysosome by regulating the intracellular sphingolipid metabolism, in turn participates in cholesterol homeostasis. May alter the transbilayer distribution of ceramide in the intraluminal membrane lipid bilayer, favoring its retention in the outer leaflet that results in increased acid ceramidase activity in the late endosome/lysosome, facilitating ceramide deacylation to sphingosine leading to the sequestration of free cholesterol in lysosomes. In addition regulates amyloid-beta production either by activating a signaling pathway that regulates amyloid precursor protein transcription through the modulation of sphingolipid metabolism or through its role in gamma-secretase processing of APP. May play a role in myelin formation. In Homo sapiens (Human), this protein is ATP-binding cassette sub-family A member 2.